The primary structure comprises 687 residues: Pentatricopeptide repeat-containing protein At3g09060 (687 aa).

18 PPR repeats span residues 42-76 (SAVVYHHILRRLSETRMVNHVSRIVELIRSQECKC), 77-107 (DEDVALSVIKTYGKNSMPDQALDVFKRMREI), 113-147 (AIRSYNTLLNAFVEAKQWVKVESLFAYFETAGVAP), 148-182 (NLQTYNVLIKMSCKKKEFEKARGFLDWMWKEGFKP), 183-217 (DVFSYSTVINDLAKAGKLDDALELFDEMSERGVAP), 218-253 (DVTCYNILIDGFLKEKDHKTAMELWDRLLEDSSVYP), 254-288 (NVKTHNIMISGLSKCGRVDDCLKIWERMKQNEREK), 289-323 (DLYTYSSLIHGLCDAGNVDKAESVFNELDERKASI), 324-358 (DVVTYNTMLGGFCRCGKIKESLELWRIMEHKNSVN), 359-392 (IVSYNILIKGLLENGKIDEATMIWRLMPAKGYAA), 393-427 (DKTTYGIFIHGLCVNGYVNKALGVMQEVESSGGHL), 428-462 (DVYAYASIIDCLCKKKRLEEASNLVKEMSKHGVEL), 463-497 (NSHVCNALIGGLIRDSRLGEASFFLREMGKNGCRP), 498-532 (TVVSYNILICGLCKAGKFGEASAFVKEMLENGWKP), 533-567 (DLKTYSILLCGLCRDRKIDLALELWHQFLQSGLET), 568-602 (DVMMHNILIHGLCSVGKLDDAMTVMANMEHRNCTA), 603-637 (NLVTYNTLMEGFFKVGDSNRATVIWGYMYKMGLQP), and 638-672 (DIISYNTIMKGLCMCRGVSYAMEFFDDARNHGIFP).

It belongs to the PPR family. P subfamily.

This chain is Pentatricopeptide repeat-containing protein At3g09060, found in Arabidopsis thaliana (Mouse-ear cress).